Consider the following 432-residue polypeptide: 3-phosphoshikimate 1-carboxyvinyltransferase (432 aa).

3-phosphoshikimate-binding residues include K23, S24, and R28. Residue K23 participates in phosphoenolpyruvate binding. Positions 95 and 123 each coordinate phosphoenolpyruvate. Residues S167, Q169, D317, and K344 each contribute to the 3-phosphoshikimate site. Q169 contacts phosphoenolpyruvate. D317 serves as the catalytic Proton acceptor. Residues R348 and R390 each contribute to the phosphoenolpyruvate site.

The protein belongs to the EPSP synthase family. In terms of assembly, monomer.

It localises to the cytoplasm. The catalysed reaction is 3-phosphoshikimate + phosphoenolpyruvate = 5-O-(1-carboxyvinyl)-3-phosphoshikimate + phosphate. Its pathway is metabolic intermediate biosynthesis; chorismate biosynthesis; chorismate from D-erythrose 4-phosphate and phosphoenolpyruvate: step 6/7. Its function is as follows. Catalyzes the transfer of the enolpyruvyl moiety of phosphoenolpyruvate (PEP) to the 5-hydroxyl of shikimate-3-phosphate (S3P) to produce enolpyruvyl shikimate-3-phosphate and inorganic phosphate. The polypeptide is 3-phosphoshikimate 1-carboxyvinyltransferase (Staphylococcus saprophyticus subsp. saprophyticus (strain ATCC 15305 / DSM 20229 / NCIMB 8711 / NCTC 7292 / S-41)).